The following is a 477-amino-acid chain: tRNA-2-methylthio-N(6)-dimethylallyladenosine synthase (477 aa).

The region spanning 13–130 (GGLFIKTYGC…LPAMIEEALA (118 aa)) is the MTTase N-terminal domain. Positions 22, 59, 93, 178, 182, and 185 each coordinate [4Fe-4S] cluster. In terms of domain architecture, Radical SAM core spans 164–396 (ESNGVSAFVS…QAMLNEQTAA (233 aa)). The region spanning 399-462 (EGMVGTTQRV…ANSLKGKLVA (64 aa)) is the TRAM domain.

Belongs to the methylthiotransferase family. MiaB subfamily. As to quaternary structure, monomer. [4Fe-4S] cluster is required as a cofactor.

It localises to the cytoplasm. The catalysed reaction is N(6)-dimethylallyladenosine(37) in tRNA + (sulfur carrier)-SH + AH2 + 2 S-adenosyl-L-methionine = 2-methylsulfanyl-N(6)-dimethylallyladenosine(37) in tRNA + (sulfur carrier)-H + 5'-deoxyadenosine + L-methionine + A + S-adenosyl-L-homocysteine + 2 H(+). In terms of biological role, catalyzes the methylthiolation of N6-(dimethylallyl)adenosine (i(6)A), leading to the formation of 2-methylthio-N6-(dimethylallyl)adenosine (ms(2)i(6)A) at position 37 in tRNAs that read codons beginning with uridine. The polypeptide is tRNA-2-methylthio-N(6)-dimethylallyladenosine synthase (Hydrogenovibrio crunogenus (strain DSM 25203 / XCL-2) (Thiomicrospira crunogena)).